Here is a 1057-residue protein sequence, read N- to C-terminus: Carbamoyl phosphate synthase large chain (1057 aa).

The segment at Met-1–Asp-401 is carboxyphosphate synthetic domain. Residues Arg-129, Arg-169, Gly-175, Gly-176, Gln-208, Ile-210, Glu-215, Gly-241, Ile-242, His-243, Gln-284, and Glu-298 each contribute to the ATP site. In terms of domain architecture, ATP-grasp 1 spans Arg-133–Val-327. Mg(2+) contacts are provided by Gln-284, Glu-298, and Asn-300. Mn(2+) contacts are provided by Gln-284, Glu-298, and Asn-300. The oligomerization domain stretch occupies residues Ile-402–Ser-546. A carbamoyl phosphate synthetic domain region spans residues Ile-547–Lys-929. Positions Asn-671–Leu-861 constitute an ATP-grasp 2 domain. ATP is bound by residues Arg-707, Gln-746, Leu-748, Glu-752, Gly-777, Val-778, His-779, Ser-780, Gln-820, and Glu-832. Mg(2+) is bound by residues Gln-820, Glu-832, and Asn-834. Mn(2+) contacts are provided by Gln-820, Glu-832, and Asn-834. One can recognise an MGS-like domain in the interval Met-930–Leu-1057. The interval Met-930 to Leu-1057 is allosteric domain.

Belongs to the CarB family. Composed of two chains; the small (or glutamine) chain promotes the hydrolysis of glutamine to ammonia, which is used by the large (or ammonia) chain to synthesize carbamoyl phosphate. Tetramer of heterodimers (alpha,beta)4. Mg(2+) serves as cofactor. The cofactor is Mn(2+).

The enzyme catalyses hydrogencarbonate + L-glutamine + 2 ATP + H2O = carbamoyl phosphate + L-glutamate + 2 ADP + phosphate + 2 H(+). It carries out the reaction hydrogencarbonate + NH4(+) + 2 ATP = carbamoyl phosphate + 2 ADP + phosphate + 2 H(+). Its pathway is amino-acid biosynthesis; L-arginine biosynthesis; carbamoyl phosphate from bicarbonate: step 1/1. It participates in pyrimidine metabolism; UMP biosynthesis via de novo pathway; (S)-dihydroorotate from bicarbonate: step 1/3. Functionally, large subunit of the glutamine-dependent carbamoyl phosphate synthetase (CPSase). CPSase catalyzes the formation of carbamoyl phosphate from the ammonia moiety of glutamine, carbonate, and phosphate donated by ATP, constituting the first step of 2 biosynthetic pathways, one leading to arginine and/or urea and the other to pyrimidine nucleotides. The large subunit (synthetase) binds the substrates ammonia (free or transferred from glutamine from the small subunit), hydrogencarbonate and ATP and carries out an ATP-coupled ligase reaction, activating hydrogencarbonate by forming carboxy phosphate which reacts with ammonia to form carbamoyl phosphate. In Pediococcus pentosaceus (strain ATCC 25745 / CCUG 21536 / LMG 10740 / 183-1w), this protein is Carbamoyl phosphate synthase large chain.